Reading from the N-terminus, the 194-residue chain is 3-isopropylmalate dehydratase small subunit (194 aa).

The protein belongs to the LeuD family. LeuD type 1 subfamily. In terms of assembly, heterodimer of LeuC and LeuD.

It catalyses the reaction (2R,3S)-3-isopropylmalate = (2S)-2-isopropylmalate. It participates in amino-acid biosynthesis; L-leucine biosynthesis; L-leucine from 3-methyl-2-oxobutanoate: step 2/4. Functionally, catalyzes the isomerization between 2-isopropylmalate and 3-isopropylmalate, via the formation of 2-isopropylmaleate. The polypeptide is 3-isopropylmalate dehydratase small subunit (Brevibacillus brevis (strain 47 / JCM 6285 / NBRC 100599)).